Here is a 326-residue protein sequence, read N- to C-terminus: Virulence-associated V antigen (326 aa).

It localises to the secreted. Its function is as follows. Possibly involved in calcium regulation of YOP expression, which includes the export process. In Yersinia pestis, this protein is Virulence-associated V antigen (lcrV).